The following is an 84-amino-acid chain: Small ribosomal subunit protein uS17 (84 aa).

This sequence belongs to the universal ribosomal protein uS17 family. Part of the 30S ribosomal subunit.

In terms of biological role, one of the primary rRNA binding proteins, it binds specifically to the 5'-end of 16S ribosomal RNA. In Clostridium novyi (strain NT), this protein is Small ribosomal subunit protein uS17.